The following is a 186-amino-acid chain: uncharacterized protein (186 aa).

The N-linked (GlcNAc...) asparagine; by host glycan is linked to Asn-34. Helical transmembrane passes span 47 to 67 (IGMV…ATTF), 114 to 134 (ILET…IVLL), and 144 to 164 (LEMI…TLFF).

Its subcellular location is the membrane. This is an uncharacterized protein from Acanthamoeba polyphaga mimivirus (APMV).